A 222-amino-acid polypeptide reads, in one-letter code: uncharacterized protein (222 aa).

It belongs to the ycf73 family.

It localises to the plastid. Its subcellular location is the chloroplast. This is an uncharacterized protein from Oryza nivara (Indian wild rice).